A 154-amino-acid polypeptide reads, in one-letter code: Transcriptional repressor NrdR (154 aa).

A zinc finger spans residues 3 to 34 (CPFCRHSDSRVIDSRETDEGQAIRRRRSCPEC). The ATP-cone domain maps to 46-136 (VAVVKRSGVT…VYRSFSSADD (91 aa)).

This sequence belongs to the NrdR family. Zn(2+) serves as cofactor.

Negatively regulates transcription of bacterial ribonucleotide reductase nrd genes and operons by binding to NrdR-boxes. The polypeptide is Transcriptional repressor NrdR (Mycobacterium leprae (strain Br4923)).